A 477-amino-acid polypeptide reads, in one-letter code: Ankyrin repeat, SAM and basic leucine zipper domain-containing protein 1 (477 aa).

A disordered region spans residues 1–24; sequence MATSALRGLAVAGGGESSESEDDG. A phosphoserine mark is found at serine 17, serine 18, and serine 20. ANK repeat units follow at residues 46 to 76, 80 to 109, 112 to 146, 150 to 179, 183 to 212, and 216 to 245; these read EKKE…SVDA, YGWT…NASF, DKQT…DPNV, RLMT…EVNT, NGYT…NKML, and DGKL…PLEG. The SAM domain occupies 274–336; the sequence is SYAEFGDLEV…KILAALKELE (63 aa).

In terms of assembly, interacts with DDX4, PIWIL1, RANBP9 and TDRD1.

Its subcellular location is the cytoplasm. Plays a central role during spermatogenesis by repressing transposable elements and preventing their mobilization, which is essential for the germline integrity. Acts via the piRNA metabolic process, which mediates the repression of transposable elements during meiosis by forming complexes composed of piRNAs and Piwi proteins and governs the methylation and subsequent repression of transposons. Its association with pi-bodies suggests a participation in the primary piRNAs metabolic process. Required prior to the pachytene stage to facilitate the production of multiple types of piRNAs, including those associated with repeats involved in the regulation of retrotransposons. May act by mediating protein-protein interactions during germ cell maturation. The chain is Ankyrin repeat, SAM and basic leucine zipper domain-containing protein 1 (ASZ1) from Saimiri boliviensis boliviensis (Bolivian squirrel monkey).